Reading from the N-terminus, the 350-residue chain is Proton-activated chloride channel (350 aa).

A disordered region spans residues M1–N51. The Cytoplasmic portion of the chain corresponds to M1–N63. Residues V64–V84 traverse the membrane as a helical segment. Residues Y85 to D297 lie on the Extracellular side of the membrane. Residues I298 to F318 traverse the membrane as a helical segment. Residues K319–S350 lie on the Cytoplasmic side of the membrane.

Belongs to the proton-activated chloride channel family.

It localises to the cell membrane. The catalysed reaction is chloride(in) = chloride(out). Its function is as follows. Chloride channel gated by pH that facilitates the entry of chloride ions into cells upon exposure to extracellular acidic pH. The protein is Proton-activated chloride channel of Xenopus laevis (African clawed frog).